We begin with the raw amino-acid sequence, 153 residues long: Pheromone-binding protein Gp-9 (153 aa).

The first 19 residues, 1–19, serve as a signal peptide directing secretion; that stretch reads MKTFVLHIFIFALVAFASA. 3 cysteine pairs are disulfide-bonded: Cys37/Cys77, Cys73/Cys129, and Cys118/Cys138.

The protein belongs to the PBP/GOBP family. As to quaternary structure, homodimer.

The protein resides in the secreted. Its function is as follows. Colony queen number, a major feature of social organization, is associated with worker genotype for Gp-9. Colonies are headed by either a single reproductive queen (monogyne form) or multiple queens (polygyne form). Differences in worker Gp-9 genotypes between social forms may cause differences in workers' abilities to recognize queens and regulate their numbers. The chain is Pheromone-binding protein Gp-9 from Solenopsis interrupta (Fire ant).